The primary structure comprises 349 residues: Phosphoribosylformylglycinamidine cyclo-ligase (349 aa).

The protein belongs to the AIR synthase family.

Its subcellular location is the cytoplasm. It carries out the reaction 2-formamido-N(1)-(5-O-phospho-beta-D-ribosyl)acetamidine + ATP = 5-amino-1-(5-phospho-beta-D-ribosyl)imidazole + ADP + phosphate + H(+). The protein operates within purine metabolism; IMP biosynthesis via de novo pathway; 5-amino-1-(5-phospho-D-ribosyl)imidazole from N(2)-formyl-N(1)-(5-phospho-D-ribosyl)glycinamide: step 2/2. The protein is Phosphoribosylformylglycinamidine cyclo-ligase of Methanococcus maripaludis (strain DSM 14266 / JCM 13030 / NBRC 101832 / S2 / LL).